Here is a 238-residue protein sequence, read N- to C-terminus: Large ribosomal subunit protein uL2 (238 aa).

The segment at 200-238 is disordered; the sequence is HGGGLHQSVSRPSTVSRNAPPGRKVGHIAARRTGRKEGK. Positions 206–216 are enriched in polar residues; sequence QSVSRPSTVSR. Residues 223 to 238 show a composition bias toward basic residues; that stretch reads KVGHIAARRTGRKEGK.

Belongs to the universal ribosomal protein uL2 family. As to quaternary structure, part of the 50S ribosomal subunit. Forms a bridge to the 30S subunit in the 70S ribosome.

One of the primary rRNA binding proteins. Required for association of the 30S and 50S subunits to form the 70S ribosome, for tRNA binding and peptide bond formation. It has been suggested to have peptidyltransferase activity; this is somewhat controversial. Makes several contacts with the 16S rRNA in the 70S ribosome. This Saccharolobus islandicus (strain L.S.2.15 / Lassen #1) (Sulfolobus islandicus) protein is Large ribosomal subunit protein uL2.